Here is a 340-residue protein sequence, read N- to C-terminus: tRNA N6-adenosine threonylcarbamoyltransferase (340 aa).

H111 and H115 together coordinate Fe cation. Residues 134-138, D167, G180, and N273 each bind substrate; that span reads IISGA. A Fe cation-binding site is contributed by D301.

It belongs to the KAE1 / TsaD family. It depends on Fe(2+) as a cofactor.

The protein resides in the cytoplasm. The catalysed reaction is L-threonylcarbamoyladenylate + adenosine(37) in tRNA = N(6)-L-threonylcarbamoyladenosine(37) in tRNA + AMP + H(+). In terms of biological role, required for the formation of a threonylcarbamoyl group on adenosine at position 37 (t(6)A37) in tRNAs that read codons beginning with adenine. Is involved in the transfer of the threonylcarbamoyl moiety of threonylcarbamoyl-AMP (TC-AMP) to the N6 group of A37, together with TsaE and TsaB. TsaD likely plays a direct catalytic role in this reaction. The polypeptide is tRNA N6-adenosine threonylcarbamoyltransferase (Wigglesworthia glossinidia brevipalpis).